A 113-amino-acid chain; its full sequence is Transcription initiation factor IIA subunit 2 (113 aa).

The protein belongs to the TFIIA subunit 2 family. In terms of assembly, TFIIA is a heterodimer of the large unprocessed subunit 1 and a small subunit gamma. It was originally believed to be a heterotrimer of an alpha, a beta and a gamma subunit.

It localises to the nucleus. TFIIA is a component of the transcription machinery of RNA polymerase II and plays an important role in transcriptional activation. TFIIA in a complex with TBP mediates transcriptional activity. The sequence is that of Transcription initiation factor IIA subunit 2 from Caenorhabditis elegans.